A 414-amino-acid polypeptide reads, in one-letter code: CCA-adding enzyme (414 aa).

ATP-binding residues include G8 and R11. G8 and R11 together coordinate CTP. Residues D21 and D23 each contribute to the Mg(2+) site. ATP contacts are provided by R91, R137, and R140. CTP is bound by residues R91, R137, and R140.

Belongs to the tRNA nucleotidyltransferase/poly(A) polymerase family. Bacterial CCA-adding enzyme type 2 subfamily. Requires Mg(2+) as cofactor.

It catalyses the reaction a tRNA precursor + 2 CTP + ATP = a tRNA with a 3' CCA end + 3 diphosphate. It carries out the reaction a tRNA with a 3' CCA end + 2 CTP + ATP = a tRNA with a 3' CCACCA end + 3 diphosphate. Its function is as follows. Catalyzes the addition and repair of the essential 3'-terminal CCA sequence in tRNAs without using a nucleic acid template. Adds these three nucleotides in the order of C, C, and A to the tRNA nucleotide-73, using CTP and ATP as substrates and producing inorganic pyrophosphate. tRNA 3'-terminal CCA addition is required both for tRNA processing and repair. Also involved in tRNA surveillance by mediating tandem CCA addition to generate a CCACCA at the 3' terminus of unstable tRNAs. While stable tRNAs receive only 3'-terminal CCA, unstable tRNAs are marked with CCACCA and rapidly degraded. This chain is CCA-adding enzyme, found in Buchnera aphidicola subsp. Acyrthosiphon pisum (strain 5A).